We begin with the raw amino-acid sequence, 197 residues long: uncharacterized protein (197 aa).

Residues 7 to 27 traverse the membrane as a helical segment; it reads PISVGQMVLICIFILIILFVI.

The protein belongs to the IIV-6 307L family.

It localises to the membrane. This is an uncharacterized protein from Acheta domesticus (House cricket).